The primary structure comprises 426 residues: Pregnancy-specific beta-1-glycoprotein 9 (426 aa).

A signal peptide spans 1–34 (MGPLPAPSCTQRITWKGLLLTASLLNFWNPPTTA). Positions 35–144 (EVTIEAQPPK…IRHFTFTLYL (110 aa)) constitute an Ig-like V-type domain. N-linked (GlcNAc...) asparagine glycosylation is found at Asn-104 and Asn-111. The Cell attachment site motif lies at 127–129 (RGD). 3 Ig-like C2-type domains span residues 147–234 (PKPY…VTLN), 242–326 (PYIT…PVIL), and 335–410 (PRIY…KSMT). Cystine bridges form between Cys-169–Cys-217, Cys-262–Cys-310, and Cys-354–Cys-394. N-linked (GlcNAc...) asparagine glycosylation is found at Asn-199, Asn-268, Asn-303, and Asn-387.

This sequence belongs to the immunoglobulin superfamily. CEA family. As to quaternary structure, interacts with latency-associated peptide; leading to TGFB1 activation.

It localises to the secreted. In terms of biological role, binds to the small latent transforming growth factor-beta complex, consisting of the N-terminal TGFB1 latency-associated peptide (LAP) and the mature form of TGFB1, thereby leading to the activation of TGFB1. The activation of TGFB1 leads to stimulation of naive CD4(+) T-cells to increase FoxP3 expression and to an increase in the number of FoxP3(+) regulatory T-cells. Induces the differentiation of a suppressive CD4(+)LAP(+)FoxP3(-) T-cell subset. Induces the secretion of TGFB1 in macrophages, but not in activated CD4(+) T-cells. May reduce the expression of several pro-inflammatory cytokines and chemokines by CD4(+) T-cells, including IL2 and IL6. This chain is Pregnancy-specific beta-1-glycoprotein 9 (PSG9), found in Homo sapiens (Human).